The sequence spans 218 residues: Adenylate kinase (218 aa).

10–15 is a binding site for ATP; the sequence is GAGKGT. Positions 30-59 are NMP; that stretch reads STGDMLRAAVKEETPLGRKAKEVMDSGNLV. AMP is bound by residues T31, R36, 57-59, 85-88, and Q92; these read NLV and GFPR. Residues 122 to 159 form an LID region; that stretch reads GRRVHPASGRTYHLTFNPPQQQGVDDETGEPLIQRVDD. ATP contacts are provided by residues R123 and 132–133; that span reads TY. Positions 156 and 167 each coordinate AMP. An ATP-binding site is contributed by G203.

This sequence belongs to the adenylate kinase family. Monomer.

The protein resides in the cytoplasm. It carries out the reaction AMP + ATP = 2 ADP. It functions in the pathway purine metabolism; AMP biosynthesis via salvage pathway; AMP from ADP: step 1/1. Its function is as follows. Catalyzes the reversible transfer of the terminal phosphate group between ATP and AMP. Plays an important role in cellular energy homeostasis and in adenine nucleotide metabolism. The protein is Adenylate kinase of Chlorobium phaeovibrioides (strain DSM 265 / 1930) (Prosthecochloris vibrioformis (strain DSM 265)).